The sequence spans 317 residues: Glycine--tRNA ligase alpha subunit (317 aa).

The protein belongs to the class-II aminoacyl-tRNA synthetase family. Tetramer of two alpha and two beta subunits.

The protein localises to the cytoplasm. The enzyme catalyses tRNA(Gly) + glycine + ATP = glycyl-tRNA(Gly) + AMP + diphosphate. This chain is Glycine--tRNA ligase alpha subunit, found in Leptothrix cholodnii (strain ATCC 51168 / LMG 8142 / SP-6) (Leptothrix discophora (strain SP-6)).